Reading from the N-terminus, the 2134-residue chain is Tudor domain-containing protein 6 (2134 aa).

The disordered stretch occupies residues Arg287–Pro315. Thr292 is modified (phosphothreonine). 4 Tudor domains span residues Pro309 to Met368, Arg542 to Leu599, Tyr820 to Val879, and Thr1038 to Val1092. The segment at Ser1271–Pro1296 is disordered. Residues Leu1282 to Pro1296 are compositionally biased toward basic and acidic residues. 2 consecutive Tudor domains span residues Gln1358 to Leu1417 and Cys1570 to Val1630. Disordered stretches follow at residues Lys1699 to Lys1733 and Leu1860 to Gly1885. Basic and acidic residues predominate over residues Leu1711–Gly1722. Residues Ser1723 and Ser1726 each carry the phosphoserine modification. Ser1925 is subject to Phosphoserine. The span at Ala1930–Arg1939 shows a compositional bias: polar residues. Positions Ala1930–Pro1985 are disordered. Phosphoserine is present on residues Ser1980, Ser2063, and Ser2115.

In terms of assembly, found in a mRNP complex (i.e. messenger ribonucleoproteins which correspond to mRNA with bound proteins), at least composed of TDRD1, TDRD6, TDRD7 and DDX4. Found in a complex, at least composed of PIWIL1, PIWIL2, DDX4 and TDRD6. Interacts with Tex19.1 and probably Tex19.2. Interacts with PRMT5. Interacts with SNRPB (when methylated); to trigger spliceosome formation. Post-translationally, undergoes proteolytic cleavage near the C-terminal by an unknown protease during the transition from meiosis I to meiosis II in primary spermatocytes. As to expression, testis specific. Expressed in primary spermatocytes at post natal (PN) day 17.5. Expressed in midpachytene stage of primary spermatocytes at PN16 and in round spermatids at PN22 (at protein level).

The protein localises to the cytoplasm. Functionally, tudor domain-containing protein involved in germ cell development, more specifically the formation of chromatoid body (during spermiogenesis), Balbiani body (during oogenesis), germ plasm (upon fertilization), and for proper miRNA expression and spliceosome maturation. Essential for RNA-dependent helicase UPF1 localization to chromatoid body, for UPF1-UPF2 and UPF1-DDX4 interactions which are required for mRNA degradation, using the extended 3' UTR-triggered nonsense-mediated mRNA decay (NMD) pathway. Involved in spliceosome maturation and mRNA splicing in prophase I spermatocytes through interaction with arginine N-methyltransferase PRMT5 and symmetrically arginine dimethylated SNRPB (small nuclear ribonucleoprotein-associated protein). The protein is Tudor domain-containing protein 6 of Mus musculus (Mouse).